Here is a 196-residue protein sequence, read N- to C-terminus: Recombination protein RecR (196 aa).

A C4-type zinc finger spans residues 57-72 (CERCHTFTQADICATC). In terms of domain architecture, Toprim spans 80–175 (SKLCVVETPA…RLTRLARGVP (96 aa)).

The protein belongs to the RecR family.

Its function is as follows. May play a role in DNA repair. It seems to be involved in an RecBC-independent recombinational process of DNA repair. It may act with RecF and RecO. The chain is Recombination protein RecR from Albidiferax ferrireducens (strain ATCC BAA-621 / DSM 15236 / T118) (Rhodoferax ferrireducens).